Reading from the N-terminus, the 248-residue chain is Peroxisomal membrane protein 11A (248 aa).

The Cytoplasmic segment spans residues methionine 1–glutamate 97. A helical membrane pass occupies residues leucine 98–isoleucine 118. The Lumenal segment spans residues tryptophan 119–lysine 220. The chain crosses the membrane as a helical span at residues glycine 221–threonine 241. Topologically, residues histidine 242–cysteine 248 are cytoplasmic.

This sequence belongs to the peroxin-11 family. As to quaternary structure, homooligomer. Interacts with ARC5 and FIS1B on peroxisomes. Expressed in developing siliques.

The protein resides in the peroxisome membrane. Functionally, involved in peroxisomal proliferation. Promotes peroxisomal duplication, aggregation or elongation without fission. This is Peroxisomal membrane protein 11A (PEX11A) from Arabidopsis thaliana (Mouse-ear cress).